The primary structure comprises 227 residues: Cytochrome c oxidase subunit 2 (227 aa).

Over 1–14 (MAYPMQLGFQDATS) the chain is Mitochondrial intermembrane. The chain crosses the membrane as a helical span at residues 15–45 (PIMEELLHFHDHTLMIVFLISSLVLYIISLM). The Mitochondrial matrix segment spans residues 46–59 (LTTKLTHTSTMDAQ). The helical transmembrane segment at 60 to 87 (EVETVWTILPAIILIMIALPSLRILYMM) threads the bilayer. At 88–227 (DEINNPSLTV…YFEKWSASML (140 aa)) the chain is on the mitochondrial intermembrane side. Cu cation is bound by residues His-161, Cys-196, Glu-198, Cys-200, His-204, and Met-207. Glu-198 is a binding site for Mg(2+). Phosphotyrosine is present on Tyr-218.

The protein belongs to the cytochrome c oxidase subunit 2 family. In terms of assembly, component of the cytochrome c oxidase (complex IV, CIV), a multisubunit enzyme composed of 14 subunits. The complex is composed of a catalytic core of 3 subunits MT-CO1, MT-CO2 and MT-CO3, encoded in the mitochondrial DNA, and 11 supernumerary subunits COX4I, COX5A, COX5B, COX6A, COX6B, COX6C, COX7A, COX7B, COX7C, COX8 and NDUFA4, which are encoded in the nuclear genome. The complex exists as a monomer or a dimer and forms supercomplexes (SCs) in the inner mitochondrial membrane with NADH-ubiquinone oxidoreductase (complex I, CI) and ubiquinol-cytochrome c oxidoreductase (cytochrome b-c1 complex, complex III, CIII), resulting in different assemblies (supercomplex SCI(1)III(2)IV(1) and megacomplex MCI(2)III(2)IV(2)). Found in a complex with TMEM177, COA6, COX18, COX20, SCO1 and SCO2. Interacts with TMEM177 in a COX20-dependent manner. Interacts with COX20. Interacts with COX16. Requires Cu cation as cofactor.

It is found in the mitochondrion inner membrane. The enzyme catalyses 4 Fe(II)-[cytochrome c] + O2 + 8 H(+)(in) = 4 Fe(III)-[cytochrome c] + 2 H2O + 4 H(+)(out). In terms of biological role, component of the cytochrome c oxidase, the last enzyme in the mitochondrial electron transport chain which drives oxidative phosphorylation. The respiratory chain contains 3 multisubunit complexes succinate dehydrogenase (complex II, CII), ubiquinol-cytochrome c oxidoreductase (cytochrome b-c1 complex, complex III, CIII) and cytochrome c oxidase (complex IV, CIV), that cooperate to transfer electrons derived from NADH and succinate to molecular oxygen, creating an electrochemical gradient over the inner membrane that drives transmembrane transport and the ATP synthase. Cytochrome c oxidase is the component of the respiratory chain that catalyzes the reduction of oxygen to water. Electrons originating from reduced cytochrome c in the intermembrane space (IMS) are transferred via the dinuclear copper A center (CU(A)) of subunit 2 and heme A of subunit 1 to the active site in subunit 1, a binuclear center (BNC) formed by heme A3 and copper B (CU(B)). The BNC reduces molecular oxygen to 2 water molecules using 4 electrons from cytochrome c in the IMS and 4 protons from the mitochondrial matrix. The sequence is that of Cytochrome c oxidase subunit 2 (MT-CO2) from Capra hircus (Goat).